The primary structure comprises 289 residues: Protease HtpX homolog (289 aa).

A run of 2 helical transmembrane segments spans residues 7–26 (TAAL…YWVI) and 31–48 (GLII…FSWY). Residue His-132 participates in Zn(2+) binding. Residue Glu-133 is part of the active site. His-136 lines the Zn(2+) pocket. 2 consecutive transmembrane segments (helical) span residues 151 to 171 (VAGA…FGGG) and 182 to 202 (LGVL…QLAI). Zn(2+) is bound at residue Glu-207.

Belongs to the peptidase M48B family. Zn(2+) is required as a cofactor.

Its subcellular location is the cell inner membrane. The chain is Protease HtpX homolog from Nostoc punctiforme (strain ATCC 29133 / PCC 73102).